A 230-amino-acid polypeptide reads, in one-letter code: Cytidylate kinase (230 aa).

An ATP-binding site is contributed by 10 to 18 (GPAGSGKST).

It belongs to the cytidylate kinase family. Type 1 subfamily.

Its subcellular location is the cytoplasm. It carries out the reaction CMP + ATP = CDP + ADP. The catalysed reaction is dCMP + ATP = dCDP + ADP. In Leptospira borgpetersenii serovar Hardjo-bovis (strain JB197), this protein is Cytidylate kinase.